Consider the following 313-residue polypeptide: Methionyl-tRNA formyltransferase (313 aa).

109–112 (SLLP) serves as a coordination point for (6S)-5,6,7,8-tetrahydrofolate.

This sequence belongs to the Fmt family.

The catalysed reaction is L-methionyl-tRNA(fMet) + (6R)-10-formyltetrahydrofolate = N-formyl-L-methionyl-tRNA(fMet) + (6S)-5,6,7,8-tetrahydrofolate + H(+). In terms of biological role, attaches a formyl group to the free amino group of methionyl-tRNA(fMet). The formyl group appears to play a dual role in the initiator identity of N-formylmethionyl-tRNA by promoting its recognition by IF2 and preventing the misappropriation of this tRNA by the elongation apparatus. The sequence is that of Methionyl-tRNA formyltransferase from Thermotoga sp. (strain RQ2).